We begin with the raw amino-acid sequence, 205 residues long: DNA-directed RNA polymerase RPB5 homolog (205 aa).

This sequence belongs to the archaeal RpoH/eukaryotic RPB5 RNA polymerase subunit family. In terms of assembly, part of the viral DNA-directed RNA polymerase that consists of 8 polII-like subunits (RPB1, RPB2, RPB3, RPB5, RPB6, RPB7, RPB9, RPB10), a capping enzyme and a termination factor.

It localises to the host cytoplasm. It is found in the virion. In terms of biological role, component of the DNA-directed RNA polymerase (RNAP) that catalyzes the transcription in the cytoplasm of viral DNA into RNA using the four ribonucleoside triphosphates as substrates. The polypeptide is DNA-directed RNA polymerase RPB5 homolog (Ornithodoros (relapsing fever ticks)).